The sequence spans 651 residues: ATP-dependent RNA helicase MRH4, mitochondrial (651 aa).

Residues 1-61 (MLRSSLGSVC…SNARQATRRE (61 aa)) constitute a mitochondrion transit peptide. Over residues 45-56 (SSLSFSTSNARQ) the composition is skewed to polar residues. The segment at 45 to 137 (SSLSFSTSNA…GGKKLGRDGK (93 aa)) is disordered. 2 stretches are compositionally biased toward basic and acidic residues: residues 72–83 (RVGRSTARDGDK) and 124–137 (NGRE…RDGK). The short motif at 167–200 (DSFDQFDLLPQVKDAVLNEALKGMLDIKPTPVQR) is the Q motif element. Positions 210 to 241 (TTGARSRWRTKSKPADSGSEAASPDAPPPPRE) are disordered. Over residues 224–233 (ADSGSEAASP) the composition is skewed to low complexity. The 212-residue stretch at 234–445 (DAPPPPREEF…ASRFPNMRRI (212 aa)) folds into the Helicase ATP-binding domain. 247–254 (AETGSGKT) provides a ligand contact to ATP. Residues 392–395 (DEAD) carry the DEAD box motif. Residues 494–651 (PVKGQVDVRR…ESMFMGQALV (158 aa)) enclose the Helicase C-terminal domain.

Belongs to the DEAD box helicase family. MRH4 subfamily.

The protein resides in the mitochondrion. The enzyme catalyses ATP + H2O = ADP + phosphate + H(+). Its function is as follows. ATP-binding RNA helicase involved in mitochondrial RNA metabolism. Required for maintenance of mitochondrial DNA. This is ATP-dependent RNA helicase MRH4, mitochondrial (MRH4) from Pyricularia oryzae (strain 70-15 / ATCC MYA-4617 / FGSC 8958) (Rice blast fungus).